The following is a 721-amino-acid chain: Catalase-peroxidase 1 (721 aa).

Positions 98-223 (WHAAGSYRVA…LAAVQMGLIY (126 aa)) form a cross-link, tryptophyl-tyrosyl-methioninium (Trp-Tyr) (with M-249). The Proton acceptor role is filled by histidine 99. Positions 223–249 (YVNPEGVNGQPDPLRTAQDVRVTFGRM) form a cross-link, tryptophyl-tyrosyl-methioninium (Tyr-Met) (with W-98). Histidine 264 is a binding site for heme b.

Belongs to the peroxidase family. Peroxidase/catalase subfamily. As to quaternary structure, homodimer or homotetramer. The cofactor is heme b. Formation of the three residue Trp-Tyr-Met cross-link is important for the catalase, but not the peroxidase activity of the enzyme.

It catalyses the reaction H2O2 + AH2 = A + 2 H2O. The enzyme catalyses 2 H2O2 = O2 + 2 H2O. Bifunctional enzyme with both catalase and broad-spectrum peroxidase activity. This Legionella pneumophila subsp. pneumophila (strain Philadelphia 1 / ATCC 33152 / DSM 7513) protein is Catalase-peroxidase 1.